The chain runs to 77 residues: Major outer membrane lipoprotein Lpp (77 aa).

A signal peptide spans 1-19 (MNRTKLVLGAVILGSHSAG). C20 carries the N-palmitoyl cysteine lipid modification. A lipid anchor (S-diacylglycerol cysteine) is attached at C20. 2 repeats span residues 23–33 (NAKIDQLSSDV) and 37–47 (NAKVDQLSNDV). Residues 26-74 (IDQLSSDVQTLNAKVDQLSNDVNAMRSDVQAAKDDAARANQRLDNQAHA) adopt a coiled-coil conformation. Positions 56–77 (AAKDDAARANQRLDNQAHAYKK) are disordered. K77 bears the N6-murein peptidoglycan lysine mark.

It belongs to the Lpp family. As to quaternary structure, homotrimer.

It localises to the cell outer membrane. It is found in the secreted. The protein resides in the cell wall. A highly abundant outer membrane lipoprotein that controls the distance between the inner and outer membranes. The only protein known to be covalently linked to the peptidoglycan network (PGN). Also non-covalently binds the PGN. The link between the cell outer membrane and PGN contributes to maintenance of the structural and functional integrity of the cell envelope, and maintains the correct distance between the PGN and the outer membrane. This is Major outer membrane lipoprotein Lpp from Serratia marcescens.